The primary structure comprises 220 residues: Large ribosomal subunit protein bL25 (220 aa).

Positions Glu-186–Ala-199 are enriched in acidic residues. Residues Glu-186–Glu-220 form a disordered region. Residues Ala-211–Glu-220 are compositionally biased toward basic and acidic residues.

This sequence belongs to the bacterial ribosomal protein bL25 family. CTC subfamily. In terms of assembly, part of the 50S ribosomal subunit; part of the 5S rRNA/L5/L18/L25 subcomplex. Contacts the 5S rRNA. Binds to the 5S rRNA independently of L5 and L18.

Functionally, this is one of the proteins that binds to the 5S RNA in the ribosome where it forms part of the central protuberance. The sequence is that of Large ribosomal subunit protein bL25 from Christiangramia forsetii (strain DSM 17595 / CGMCC 1.15422 / KT0803) (Gramella forsetii).